Consider the following 304-residue polypeptide: MKHLTTMSELSTEEIKDLLQTAQELKSGKTDNQLTGKFAANLFFEPSTRTRFSFEVAEKKLGMNVLNLDGTSTSVQKGETLYDTIRTLESIGVDVCVIRHSEDEYYEELVSQVNIPILNAGDGCGQHPTQSLLDLMTIYEEFNTFKGLTVSIHGDIKHSRVARSNAEVLTRLGARVLFSGPSEWQDEENTFGTYVSMDEAVESSDVVMLLRIQNERHQSAVSQEGYLNKYGLTVERAERMKRHAIIMHPAPVNRGVEIDDSLVESEKSRIFKQMKNGVFIRMAVIQRALQTNVKRGEAAYVISH.

Carbamoyl phosphate is bound by residues Arg49 and Thr50. Lys77 serves as a coordination point for L-aspartate. Arg99, His127, and Gln130 together coordinate carbamoyl phosphate. 2 residues coordinate L-aspartate: Arg160 and Arg211. Carbamoyl phosphate contacts are provided by Ala250 and Pro251. Ser303 carries the post-translational modification Phosphoserine.

The protein belongs to the aspartate/ornithine carbamoyltransferase superfamily. ATCase family. As to quaternary structure, heterododecamer (2C3:3R2) of six catalytic PyrB chains organized as two trimers (C3), and six regulatory PyrI chains organized as three dimers (R2).

The catalysed reaction is carbamoyl phosphate + L-aspartate = N-carbamoyl-L-aspartate + phosphate + H(+). It participates in pyrimidine metabolism; UMP biosynthesis via de novo pathway; (S)-dihydroorotate from bicarbonate: step 2/3. Its function is as follows. Catalyzes the condensation of carbamoyl phosphate and aspartate to form carbamoyl aspartate and inorganic phosphate, the committed step in the de novo pyrimidine nucleotide biosynthesis pathway. The protein is Aspartate carbamoyltransferase catalytic subunit of Bacillus subtilis (strain 168).